The chain runs to 277 residues: Polar tube protein 2 (277 aa).

A signal peptide spans methionine 1–proline 18. A glycan (N-linked (GlcNAc...) asparagine) is linked at asparagine 134. Over residues glutamine 237–alanine 251 the composition is skewed to basic and acidic residues. The segment at glutamine 237–glutamate 277 is disordered. The segment covering serine 255–glutamate 265 has biased composition (acidic residues).

In terms of assembly, interacts with PTP1 and PTP3.

The protein resides in the spore polar tube. Involved in formation of a polar tube through which the infectious agent is passed on to the host cell. The polypeptide is Polar tube protein 2 (PTP2) (Encephalitozoon cuniculi (strain GB-M1) (Microsporidian parasite)).